The following is a 174-amino-acid chain: Shikimate kinase 2 (174 aa).

An ATP-binding site is contributed by 12 to 17 (GCGKTT). The Mg(2+) site is built by Thr-16 and Asp-32. Asp-34, Arg-58, and Gly-79 together coordinate substrate. Residues 112-126 (QAAPEEDLRPTLTGK) form an LID domain region. ATP is bound at residue Arg-120. Substrate is bound at residue Arg-139.

This sequence belongs to the shikimate kinase family. AroL subfamily. In terms of assembly, monomer. Requires Mg(2+) as cofactor.

It is found in the cytoplasm. The enzyme catalyses shikimate + ATP = 3-phosphoshikimate + ADP + H(+). It functions in the pathway metabolic intermediate biosynthesis; chorismate biosynthesis; chorismate from D-erythrose 4-phosphate and phosphoenolpyruvate: step 5/7. Catalyzes the specific phosphorylation of the 3-hydroxyl group of shikimic acid using ATP as a cosubstrate. The sequence is that of Shikimate kinase 2 from Shigella boydii serotype 4 (strain Sb227).